Consider the following 153-residue polypeptide: Large ribosomal subunit protein uL13 (153 aa).

It belongs to the universal ribosomal protein uL13 family. In terms of assembly, part of the 50S ribosomal subunit.

Functionally, this protein is one of the early assembly proteins of the 50S ribosomal subunit, although it is not seen to bind rRNA by itself. It is important during the early stages of 50S assembly. The polypeptide is Large ribosomal subunit protein uL13 (Methylobacterium nodulans (strain LMG 21967 / CNCM I-2342 / ORS 2060)).